The chain runs to 195 residues: Thymidine kinase (195 aa).

Residues 15 to 22, glutamate 23, 57 to 58, and 88 to 91 contribute to the ATP site; these read GPMYSGKS, SH, and DEVQ. The active-site Proton acceptor is the glutamate 89. Substrate is bound at residue phenylalanine 120. The Zn(2+) site is built by cysteine 145 and cysteine 148. Tyrosine 179 is a substrate binding site. Cysteine 183 and cysteine 186 together coordinate Zn(2+).

It belongs to the thymidine kinase family.

It is found in the cytoplasm. The catalysed reaction is thymidine + ATP = dTMP + ADP + H(+). The protein is Thymidine kinase of Clostridium acetobutylicum (strain ATCC 824 / DSM 792 / JCM 1419 / IAM 19013 / LMG 5710 / NBRC 13948 / NRRL B-527 / VKM B-1787 / 2291 / W).